Here is a 5193-residue protein sequence, read N- to C-terminus: Usherin (5193 aa).

The first 34 residues, 1–34, serve as a signal peptide directing secretion; sequence MHYLALSPGFLCYTIKTLILAYLASVLVLAASQG. The Extracellular segment spans residues 35 to 5033; the sequence is VFPRLENVGA…KSTEFYSELW (4999 aa). 7 N-linked (GlcNAc...) asparagine glycosylation sites follow: Asn230, Asn258, Asn274, Asn358, Asn415, Asn448, and Asn469. In terms of domain architecture, Laminin N-terminal spans 268-514; it reads QDFRLYNVSL…AVDEIIVSGR (247 aa). 24 cysteine pairs are disulfide-bonded: Cys515–Cys524, Cys517–Cys533, Cys535–Cys546, Cys549–Cys569, Cys572–Cys581, Cys574–Cys602, Cys605–Cys614, Cys617–Cys635, Cys638–Cys652, Cys640–Cys659, Cys661–Cys670, Cys673–Cys688, Cys691–Cys705, Cys693–Cys712, Cys714–Cys723, Cys726–Cys741, Cys744–Cys756, Cys746–Cys763, Cys765–Cys774, Cys777–Cys789, Cys792–Cys805, Cys794–Cys812, Cys814–Cys823, and Cys826–Cys846. 10 consecutive Laminin EGF-like domains span residues 515–571, 572–637, 638–690, 691–743, 744–791, 792–848, 853–896, 897–947, 948–998, and 999–1049; these read CQCH…NCKP, CQCH…ACKL, CDCN…GCRP, CNCN…GCEP, CQCN…ACEV, CDCS…NCEK, NGSL…GCQA, CDCD…GCLP, CLCH…RCRP, and CHCH…GCSK. Asn647 carries an N-linked (GlcNAc...) asparagine glycan. N-linked (GlcNAc...) asparagine glycosylation is found at Asn836 and Asn853. 14 cysteine pairs are disulfide-bonded: Cys867/Cys876, Cys879/Cys894, Cys897/Cys910, Cys899/Cys917, Cys919/Cys928, Cys931/Cys945, Cys948/Cys960, Cys950/Cys967, Cys969/Cys979, Cys982/Cys996, Cys999/Cys1011, Cys1001/Cys1018, Cys1020/Cys1029, and Cys1032/Cys1047. Asn885 carries an N-linked (GlcNAc...) asparagine glycan. N-linked (GlcNAc...) asparagine glycosylation is present at Asn941. N-linked (GlcNAc...) asparagine glycosylation is present at Asn1008. 5 consecutive Fibronectin type-III domains span residues 1055-1143, 1147-1241, 1242-1357, 1358-1462, and 1463-1566; these read PPPR…TKPE, GHLN…APPQ, TQGP…SVPV, FMAP…AAPA, and QLRP…LQLK. N-linked (GlcNAc...) asparagine glycans are attached at residues Asn1068, Asn1089, Asn1150, Asn1171, and Asn1222. N-linked (GlcNAc...) asparagine glycosylation is found at Asn1382, Asn1473, and Asn1626. 2 Laminin G-like domains span residues 1511–1700 and 1705–1882; these read TKGT…WEGC and EEGV…QDGC. Cysteines 1663 and 1700 form a disulfide. Asn1770 is a glycosylation site (N-linked (GlcNAc...) asparagine). 13 Fibronectin type-III domains span residues 1847 to 1946, 1948 to 2045, 2046 to 2132, 2133 to 2234, 2235 to 2321, 2322 to 2421, 2422 to 2525, 2526 to 2613, 2617 to 2713, 2717 to 2810, 2811 to 2914, 2918 to 3009, and 3013 to 3103; these read EPGF…TAPQ, VPTP…TPQE, APQE…TAQL, PPEQ…IPEG, VPAP…APPE, GVVN…SVEM, PPGA…DKPG, PIDA…TLPG, GIPS…TRPC, GVQP…THPA, PPQE…TLAG, RGAT…MWEE, and GMLP…TPSD. Cys1853 and Cys1882 are oxidised to a cystine. Asn1894 carries an N-linked (GlcNAc...) asparagine glycan. The tract at residues 1931–1955 is disordered; the sequence is VSSDWSRGRTLGTAPQSVPTPSRAQ. Over residues 1943 to 1955 the composition is skewed to polar residues; sequence TAPQSVPTPSRAQ. 10 N-linked (GlcNAc...) asparagine glycosylation sites follow: Asn1958, Asn2095, Asn2121, Asn2177, Asn2186, Asn2249, Asn2276, Asn2313, Asn2368, and Asn2404. N-linked (GlcNAc...) asparagine glycosylation is found at Asn2575, Asn2647, Asn2701, Asn2761, and Asn2779. N-linked (GlcNAc...) asparagine glycans are attached at residues Asn2928, Asn2998, Asn3023, Asn3090, Asn3208, Asn3322, and Asn3411. Fibronectin type-III domains are found at residues 3395–3489, 3490–3580, 3581–3671, 3672–3766, 3769–3857, 3858–3955, 3956–4059, 4060–4148, 4149–4256, 4257–4346, 4347–4437, 4438–4522, 4523–4625, 4628–4725, 4726–4818, 4819–4921, and 4922–5005; these read CPAT…TRED, VPEG…TTQR, SPEN…TLQA, APQG…TPED, PPCN…TLEA, APVG…TLEA, PPRG…SAPS, GLMN…APPD, TQMA…APPD, GLSP…TPEV, PPSE…APPE, NMDP…TSPS, APSG…VPPL, PAPH…TGPA, PPEG…THPA, PPSG…TKKE, and MPQY…YDAA. N-linked (GlcNAc...) asparagine glycans are attached at residues Asn3589, Asn3645, Asn3686, Asn3712, Asn3723, and Asn3772. N-linked (GlcNAc...) asparagine glycosylation is found at Asn3976, Asn4063, Asn4194, Asn4218, Asn4304, Asn4340, Asn4365, and Asn4410. Residues Asn4556, Asn4575, Asn4683, Asn4716, Asn4746, Asn4756, Asn4765, Asn4915, and Asn4934 are each glycosylated (N-linked (GlcNAc...) asparagine). Residues 5034-5054 traverse the membrane as a helical segment; it reads FIMVMAVVGLILLAIFLSLIL. The Cytoplasmic segment spans residues 5055-5193; that stretch reads QRKIHKEPCI…EHTAFTDTHL (139 aa). A PDZ-binding motif is present at residues 5191-5193; that stretch reads THL.

As to quaternary structure, interacts with collagen IV and fibronectin via its laminin EGF-like domains. Interaction with collagen may be required for stable integration into the basement membrane. Interacts with NINL. Interacts with USH1C. Component of USH2 complex, composed of ADGRV1, PDZD7, USH2A and WHRN. Interacts with ADGRV1/MASS1 (via N-terminal PDZ domain). Interacts (via the cytoplasmic region) with WHRN. Interacts (via the cytoplasmic region) with PDZD7. Interacts (via the cytoplasmic region) with VEZT and MYO7A (via MyTH4-FERM domains); the interaction associates VEZT with the USH2 complex at the stereocilia base. In terms of tissue distribution, present in the testis, epididymis, oviduct, spleen, submaxillary gland, and small and large intestines. Not detected in the brain, skin, lung, skeletal muscle, cardiac muscle, liver or kidney. Expressed in smooth muscle of the colon and the epididymis. Also present in select vascular basement membranes. In the cochlea, it is present in virtually every basement membrane. It is particularly high in the strial capillary basement membranes (SCBMs). In the retina, it is again expressed in all of the basement membranes. It is also very prevalent in the lens capsule and the Bruch's layer between the retinal pigment epithelium and the choroid layer, which is very rich in basement membranes. In neonates in it is widely expressed in the basement membranes of the cochlea. Present in the synaptic terminals of retinal photoreceptors (at protein level).

The protein resides in the cell projection. The protein localises to the stereocilium membrane. It localises to the photoreceptor inner segment. Its subcellular location is the secreted. In terms of biological role, involved in hearing and vision as member of the USH2 complex. In the inner ear, required for the maintenance of hair bundle ankle formation, which connects growing stereocilia in developing cochlear hair cells. In retina photoreceptors, the USH2 complex is required for the maintenance of periciliary membrane complex that seems to play a role in regulating intracellular protein transport. The polypeptide is Usherin (Ush2A) (Mus musculus (Mouse)).